The following is a 260-amino-acid chain: Putative cysteine-rich repeat secretory protein 23 (260 aa).

The first 31 residues, 1–31 (MSSSFVYKSLFLVPILAVVAMQLSFVQSVLS), serve as a signal peptide directing secretion. Gnk2-homologous domains follow at residues 38-136 (YLHH…NISY) and 142-254 (LPEQ…LYLF).

It belongs to the cysteine-rich repeat secretory protein family.

Its subcellular location is the secreted. The polypeptide is Putative cysteine-rich repeat secretory protein 23 (CRRSP23) (Arabidopsis thaliana (Mouse-ear cress)).